Reading from the N-terminus, the 246-residue chain is 3-deoxy-manno-octulosonate cytidylyltransferase (246 aa).

The protein belongs to the KdsB family.

It is found in the cytoplasm. It catalyses the reaction 3-deoxy-alpha-D-manno-oct-2-ulosonate + CTP = CMP-3-deoxy-beta-D-manno-octulosonate + diphosphate. It participates in nucleotide-sugar biosynthesis; CMP-3-deoxy-D-manno-octulosonate biosynthesis; CMP-3-deoxy-D-manno-octulosonate from 3-deoxy-D-manno-octulosonate and CTP: step 1/1. Its pathway is bacterial outer membrane biogenesis; lipopolysaccharide biosynthesis. Functionally, activates KDO (a required 8-carbon sugar) for incorporation into bacterial lipopolysaccharide in Gram-negative bacteria. In Rickettsia massiliae (strain Mtu5), this protein is 3-deoxy-manno-octulosonate cytidylyltransferase.